The primary structure comprises 703 residues: MPRKTPIERYRNIGISAHIDAGKTTTTERILFYTGVSHKIGEVHDGAATMDWMEQGQERGITITSAATTAFWKGMAGNYPEHRINIIDTPGHVDFTIEVERSMRVLDGACMVYDSVGGVQPQSETVWRQANKYKVPRIAFVNKMDRIGADFFRVQKQIGERLKGVAVPIQIPIGAEDHFQGVVDLVKMKAIVWDDESQGVKFTYEDIPANLVELAHEWREKMVEAAAEASEELLEKYLHDHESLTEDEIKAALRQRTIANEIVPMLCGSAFKNKGVQAMLDAVIDYLPSPVDVPAILGHDFADPEKPAERHPSDDEPFSSLAFKIMTDPFVGQLIFFRVYSGVVESGDTVLNATKDKKERLGRILQMHANERKEIKEVRAGDIAAAVGLKEATTGDTLCDPQKPIILEKMEFPEPVISQAVEPKTKADQEKMGLALNRLAQEDPSFRVQTDEESGQTIISGMGELHLEILVDRMKREFGVEATVGKPQVAYRETVRTTAADVEGKFVKQSGGRGQYGHAVITLEPNPGKGYEFLDEIKGGVIPREFIPAVDKGITETLKSGVLAGYPVVDVKVHLTFGSYHDVDSNENAFRMAGSMAFKEAMRKAKPVLLEPMMAVEVETPEDFMGNVMGDLSSRRGIVQGMEDIAGGGGKLVRAEVPLAEMFGYSTSLRSATQGRATYTMEFKHYAETPANVSEAVINAKVK.

A tr-type G domain is found at 8 to 291 (ERYRNIGISA…AVIDYLPSPV (284 aa)). GTP-binding positions include 17 to 24 (AHIDAGKT), 88 to 92 (DTPGH), and 142 to 145 (NKMD).

This sequence belongs to the TRAFAC class translation factor GTPase superfamily. Classic translation factor GTPase family. EF-G/EF-2 subfamily.

It localises to the cytoplasm. Catalyzes the GTP-dependent ribosomal translocation step during translation elongation. During this step, the ribosome changes from the pre-translocational (PRE) to the post-translocational (POST) state as the newly formed A-site-bound peptidyl-tRNA and P-site-bound deacylated tRNA move to the P and E sites, respectively. Catalyzes the coordinated movement of the two tRNA molecules, the mRNA and conformational changes in the ribosome. This is Elongation factor G 1 from Burkholderia orbicola (strain AU 1054).